The primary structure comprises 714 residues: Pre-mRNA-splicing factor CLF1 (714 aa).

12 HAT repeats span residues 48–80 (SFQL…WEVK), 83–115 (HDFP…FELS), 117–149 (KNIT…TEET), 151–182 (KNYQ…YEKR), 184–215 (DEYD…FEMN), 265–305 (KEYE…FEKS), 315–347 (SIMI…ILQQ), 349–384 (DNNE…IWVK), 394–430 (GSIE…FEIR), 435–470 (NGLA…LEQK), 472–510 (GEWD…FEKN), and 555–586 (MRYA…FESS).

The protein belongs to the crooked-neck family. Associated with the spliceosome.

It localises to the nucleus. Functionally, involved in pre-mRNA splicing and cell cycle progression. Required for the spliceosome assembly and initiation of the DNA replication. The sequence is that of Pre-mRNA-splicing factor CLF1 (CLF1) from Debaryomyces hansenii (strain ATCC 36239 / CBS 767 / BCRC 21394 / JCM 1990 / NBRC 0083 / IGC 2968) (Yeast).